Reading from the N-terminus, the 636-residue chain is Receptor-like kinase LIP1 (636 aa).

The tract at residues 18–57 is disordered; it reads NAPCTTNETNDDNVEHDEFRPPVVATTKRTEEREPAEQQP. The region spanning 74–352 is the Protein kinase domain; that stretch reads FRQECLLGEG…SDVMVALSFL (279 aa). ATP contacts are provided by residues 80-88 and Lys103; that span reads LGEGGFGRV. Asp201 acts as the Proton acceptor in catalysis. Phosphoserine is present on residues Ser205 and Ser236. Thr242 carries the phosphothreonine modification. Residue Tyr250 is modified to Phosphotyrosine. Residues 389-636 form a disordered region; the sequence is FCISRKDVGN…EEEHISSDHD (248 aa). The stretch at 403–434 forms a coiled coil; it reads SSDSEDEEEEKEQKAEKEEESTSKKRQEQEET. Residues 413–431 show a composition bias toward basic and acidic residues; the sequence is KEQKAEKEEESTSKKRQEQ. Residues 432–455 are compositionally biased toward acidic residues; the sequence is EETATDSDDESDSNSEKDQEEEQS. The span at 480-489 shows a compositional bias: polar residues; the sequence is TNATAQSLKI. Composition is skewed to basic and acidic residues over residues 522–531 and 554–566; these read DSGRDHDDSS and HETRSYSDHDDSP. Positions 567–576 are enriched in polar residues; that stretch reads RNTSMRINSL. Basic and acidic residues-rich tracts occupy residues 588 to 603 and 619 to 636; these read NHQTRLEHIHSSKSED and SLHRIEAKEEEHISSDHD.

Belongs to the protein kinase superfamily. Ser/Thr protein kinase family. In terms of assembly, interacts with PRK6. Palmitoylated. As to expression, expressed in mature pollen and in germinating pollen tubes.

The protein resides in the cell membrane. It is found in the cytoplasm. Functionally, involved in pollen tube guidance into micropyle. Participates in perception of the ovule-secreted peptide signal LURE1. The protein is Receptor-like kinase LIP1 of Arabidopsis thaliana (Mouse-ear cress).